Reading from the N-terminus, the 155-residue chain is Small ribosomal subunit protein bS6 (155 aa).

The disordered stretch occupies residues 94–155 (EKHEEGPSAM…RPRRPREDRV (62 aa)).

This sequence belongs to the bacterial ribosomal protein bS6 family.

Its function is as follows. Binds together with bS18 to 16S ribosomal RNA. The polypeptide is Small ribosomal subunit protein bS6 (Rhizobium johnstonii (strain DSM 114642 / LMG 32736 / 3841) (Rhizobium leguminosarum bv. viciae)).